The sequence spans 349 residues: tRNA pseudouridine synthase D (349 aa).

Substrate is bound at residue Phe27. Asp80 functions as the Nucleophile in the catalytic mechanism. Position 129 (Asn129) interacts with substrate. The TRUD domain occupies 155-303 (GVPNYFGAQR…VEAARRAMLL (149 aa)). Phe329 is a binding site for substrate.

This sequence belongs to the pseudouridine synthase TruD family.

The catalysed reaction is uridine(13) in tRNA = pseudouridine(13) in tRNA. In terms of biological role, responsible for synthesis of pseudouridine from uracil-13 in transfer RNAs. This Escherichia coli O6:H1 (strain CFT073 / ATCC 700928 / UPEC) protein is tRNA pseudouridine synthase D.